Reading from the N-terminus, the 314-residue chain is Triosephosphate isomerase, chloroplastic (314 aa).

Residues 1 to 22 show a composition bias toward polar residues; it reads MAVASTSLASQLSGPKSLSQPY. The segment at 1-25 is disordered; it reads MAVASTSLASQLSGPKSLSQPYSGL. A chloroplast-targeting transit peptide spans 1 to 59; the sequence is MAVASTSLASQLSGPKSLSQPYSGLRRSCPKLDQSHSSLFQHLSLSSSSRKASRAVVAM. Substrate is bound by residues N70 and K72. The active-site Electrophile is the H154. E224 serves as the catalytic Proton acceptor.

Belongs to the triosephosphate isomerase family. Homodimer.

It is found in the plastid. It localises to the chloroplast. The enzyme catalyses D-glyceraldehyde 3-phosphate = dihydroxyacetone phosphate. Its pathway is carbohydrate biosynthesis; Calvin cycle. The polypeptide is Triosephosphate isomerase, chloroplastic (TPI) (Fragaria ananassa (Strawberry)).